The primary structure comprises 368 residues: tRNA-specific 2-thiouridylase MnmA (368 aa).

Residues G11 to S18 and M37 contribute to the ATP site. Residues N97 to D99 are interaction with target base in tRNA. The active-site Nucleophile is the C102. C102 and C199 are disulfide-bonded. Position 127 (G127) interacts with ATP. The segment at K149–Q151 is interaction with tRNA. Residue C199 is the Cysteine persulfide intermediate of the active site. The segment at R311–Y312 is interaction with tRNA.

Belongs to the MnmA/TRMU family. Interacts with TusE.

The protein resides in the cytoplasm. It carries out the reaction S-sulfanyl-L-cysteinyl-[protein] + uridine(34) in tRNA + AH2 + ATP = 2-thiouridine(34) in tRNA + L-cysteinyl-[protein] + A + AMP + diphosphate + H(+). Functionally, catalyzes the 2-thiolation of uridine at the wobble position (U34) of tRNA(Lys), tRNA(Glu) and tRNA(Gln), leading to the formation of s(2)U34, the first step of tRNA-mnm(5)s(2)U34 synthesis. Sulfur is provided by IscS, via a sulfur-relay system. Binds ATP and its substrate tRNAs. This Salmonella arizonae (strain ATCC BAA-731 / CDC346-86 / RSK2980) protein is tRNA-specific 2-thiouridylase MnmA.